A 285-amino-acid polypeptide reads, in one-letter code: NADPH-dependent 7-cyano-7-deazaguanine reductase (285 aa).

Residue 80–82 (VES) coordinates substrate. 82-83 (SK) contributes to the NADPH binding site. Catalysis depends on C191, which acts as the Thioimide intermediate. Residue D198 is the Proton donor of the active site. 231-232 (HE) lines the substrate pocket. 260-261 (RG) lines the NADPH pocket.

Belongs to the GTP cyclohydrolase I family. QueF type 2 subfamily. Homodimer.

The protein resides in the cytoplasm. It carries out the reaction 7-aminomethyl-7-carbaguanine + 2 NADP(+) = 7-cyano-7-deazaguanine + 2 NADPH + 3 H(+). It functions in the pathway tRNA modification; tRNA-queuosine biosynthesis. Catalyzes the NADPH-dependent reduction of 7-cyano-7-deazaguanine (preQ0) to 7-aminomethyl-7-deazaguanine (preQ1). The chain is NADPH-dependent 7-cyano-7-deazaguanine reductase from Psychrobacter arcticus (strain DSM 17307 / VKM B-2377 / 273-4).